We begin with the raw amino-acid sequence, 314 residues long: Methionyl-tRNA formyltransferase (314 aa).

112 to 115 lines the (6S)-5,6,7,8-tetrahydrofolate pocket; that stretch reads SLLP.

Belongs to the Fmt family.

It carries out the reaction L-methionyl-tRNA(fMet) + (6R)-10-formyltetrahydrofolate = N-formyl-L-methionyl-tRNA(fMet) + (6S)-5,6,7,8-tetrahydrofolate + H(+). Functionally, attaches a formyl group to the free amino group of methionyl-tRNA(fMet). The formyl group appears to play a dual role in the initiator identity of N-formylmethionyl-tRNA by promoting its recognition by IF2 and preventing the misappropriation of this tRNA by the elongation apparatus. In Legionella pneumophila subsp. pneumophila (strain Philadelphia 1 / ATCC 33152 / DSM 7513), this protein is Methionyl-tRNA formyltransferase.